Reading from the N-terminus, the 631-residue chain is MKKSNPWFVFFWITLLVIVLMFINFARQGGNEVELEYSQFKQHIKAGSVFKVLVAPGLIRGQFRDGDGVFKRFKTVPMDDPNLVKDMEDNKVLEFSATEKSGWLGSLLLNWGPVVLLILFCFWMMRGMSMGNKQAMSFGKTKAKLAVGASKKITFKDVAGCDEAKEELQELIEFLKDPARFQKLGGKIPKGVLLFGSPGTGKTLLAKAVAGEANVPFFSSSGSEFVEMFVGVGASRVRDLFDHGRKSAPCLLFIDEIDAVGRHRFAGIGGGHDEREQTLNQLLVEMDGFDSKEGVILIAATNRPDVLDPALLRPGRFDRQVIILSPDLKDREEILGVHSKKIRLDNDVNLNVIARRTPGFVGADLANLVNEAALLAARNSQNAVNMKNMEEAIDRILAGPQRKSRLMSDKEKNIIAYHEAGHTLVAKFLPSADPVHKVSIIPRGPALGYTLQLPEEDKYLTSKSELLDKLSILFGGRVAEELVFSEITTGAQNDISKATGIAMRMVTEFGMSDKIGPMALQRPNEEVFLGRDISRDARHSGKTSELIDEEVKNIIYSSKSRASKIIKDNVSILNKIVSYLLERENLSGEDIDKIIKGEELAPLSESSSVDEETKKKSTVEKKVINEKVIIS.

The Cytoplasmic portion of the chain corresponds to 1–5 (MKKSN). Residues 6 to 26 (PWFVFFWITLLVIVLMFINFA) form a helical membrane-spanning segment. Residues 27–102 (RQGGNEVELE…LEFSATEKSG (76 aa)) lie on the Periplasmic side of the membrane. Residues 103–123 (WLGSLLLNWGPVVLLILFCFW) form a helical membrane-spanning segment. The Cytoplasmic segment spans residues 124 to 631 (MMRGMSMGNK…KVINEKVIIS (508 aa)). 196–203 (GSPGTGKT) is a binding site for ATP. A Zn(2+)-binding site is contributed by His418. The active site involves Glu419. Zn(2+)-binding residues include His422 and Asp494.

The protein in the central section; belongs to the AAA ATPase family. This sequence in the C-terminal section; belongs to the peptidase M41 family. Homohexamer. Requires Zn(2+) as cofactor.

It localises to the cell inner membrane. Functionally, acts as a processive, ATP-dependent zinc metallopeptidase for both cytoplasmic and membrane proteins. Plays a role in the quality control of integral membrane proteins. The chain is ATP-dependent zinc metalloprotease FtsH from Endomicrobium trichonymphae.